The sequence spans 418 residues: L-rhamnose isomerase (418 aa).

The Mn(2+) site is built by His262, Asp294, and Asp296.

The protein belongs to the rhamnose isomerase family. Mn(2+) is required as a cofactor.

The protein resides in the cytoplasm. It carries out the reaction L-rhamnopyranose = L-rhamnulose. It functions in the pathway carbohydrate degradation; L-rhamnose degradation; glycerone phosphate from L-rhamnose: step 1/3. In terms of biological role, catalyzes the interconversion of L-rhamnose and L-rhamnulose. In Bacteroides thetaiotaomicron (strain ATCC 29148 / DSM 2079 / JCM 5827 / CCUG 10774 / NCTC 10582 / VPI-5482 / E50), this protein is L-rhamnose isomerase.